The chain runs to 422 residues: Glycerol-3-phosphate dehydrogenase [NAD(+)] 2 (422 aa).

NAD(+) is bound by residues 69 to 74 (GSGNWG), phenylalanine 157, lysine 180, and alanine 213. Residue lysine 180 participates in substrate binding. Catalysis depends on lysine 273, which acts as the Proton acceptor. Residues arginine 338 and glutamine 367 each coordinate NAD(+). 338–339 (RN) provides a ligand contact to substrate.

Belongs to the NAD-dependent glycerol-3-phosphate dehydrogenase family.

It carries out the reaction sn-glycerol 3-phosphate + NAD(+) = dihydroxyacetone phosphate + NADH + H(+). This is Glycerol-3-phosphate dehydrogenase [NAD(+)] 2 (GPD2) from Candida glabrata (strain ATCC 2001 / BCRC 20586 / JCM 3761 / NBRC 0622 / NRRL Y-65 / CBS 138) (Yeast).